Here is a 322-residue protein sequence, read N- to C-terminus: Pantothenate kinase (322 aa).

Gly-100 to Ser-107 is a binding site for ATP.

Belongs to the prokaryotic pantothenate kinase family.

It is found in the cytoplasm. The enzyme catalyses (R)-pantothenate + ATP = (R)-4'-phosphopantothenate + ADP + H(+). Its pathway is cofactor biosynthesis; coenzyme A biosynthesis; CoA from (R)-pantothenate: step 1/5. The chain is Pantothenate kinase from Agrobacterium fabrum (strain C58 / ATCC 33970) (Agrobacterium tumefaciens (strain C58)).